A 304-amino-acid polypeptide reads, in one-letter code: Dermonecrotic toxin LiSicTox-betaIA1ii (304 aa).

The N-terminal stretch at 1–21 (MLLCAVISFIVYAVFLQEANG) is a signal peptide. The propeptide occupies 22–26 (HAAER). The active site involves histidine 38. Positions 58 and 60 each coordinate Mg(2+). Histidine 74 functions as the Nucleophile in the catalytic mechanism. Intrachain disulfides connect cysteine 78–cysteine 84 and cysteine 80–cysteine 223. Residue aspartate 118 participates in Mg(2+) binding.

It belongs to the arthropod phospholipase D family. Class II subfamily. Requires Mg(2+) as cofactor. As to expression, expressed by the venom gland.

It is found in the secreted. The enzyme catalyses an N-(acyl)-sphingosylphosphocholine = an N-(acyl)-sphingosyl-1,3-cyclic phosphate + choline. It carries out the reaction an N-(acyl)-sphingosylphosphoethanolamine = an N-(acyl)-sphingosyl-1,3-cyclic phosphate + ethanolamine. The catalysed reaction is a 1-acyl-sn-glycero-3-phosphocholine = a 1-acyl-sn-glycero-2,3-cyclic phosphate + choline. It catalyses the reaction a 1-acyl-sn-glycero-3-phosphoethanolamine = a 1-acyl-sn-glycero-2,3-cyclic phosphate + ethanolamine. Its function is as follows. Dermonecrotic toxins cleave the phosphodiester linkage between the phosphate and headgroup of certain phospholipids (sphingolipid and lysolipid substrates), forming an alcohol (often choline) and a cyclic phosphate. This toxin acts on sphingomyelin (SM) with low activity. It may also act on ceramide phosphoethanolamine (CPE), lysophosphatidylcholine (LPC) and lysophosphatidylethanolamine (LPE), but not on lysophosphatidylserine (LPS), and lysophosphatidylglycerol (LPG). It acts by transphosphatidylation, releasing exclusively cyclic phosphate products as second products. Induces dermonecrosis, hemolysis, increased vascular permeability, edema, inflammatory response, and platelet aggregation. This Loxosceles intermedia (Brown spider) protein is Dermonecrotic toxin LiSicTox-betaIA1ii.